Consider the following 613-residue polypeptide: Threonine--tRNA ligase (613 aa).

The interval 1-147 (MRLLLIHARS…TITPQESAPQ (147 aa)) is editing domain. Catalytic stretches follow at residues 199-495 (PRYI…PALP) and 200-495 (RYID…PALP). Zn(2+)-binding residues include Cys-292, His-343, and His-464.

This sequence belongs to the class-II aminoacyl-tRNA synthetase family. Homodimer. Zn(2+) serves as cofactor.

The protein localises to the cytoplasm. It catalyses the reaction tRNA(Thr) + L-threonine + ATP = L-threonyl-tRNA(Thr) + AMP + diphosphate + H(+). Its function is as follows. Catalyzes the attachment of threonine to tRNA(Thr) in a two-step reaction: L-threonine is first activated by ATP to form Thr-AMP and then transferred to the acceptor end of tRNA(Thr). Also edits incorrectly charged L-seryl-tRNA(Thr). In Caldivirga maquilingensis (strain ATCC 700844 / DSM 13496 / JCM 10307 / IC-167), this protein is Threonine--tRNA ligase.